Consider the following 512-residue polypeptide: ATP synthase subunit alpha (512 aa).

169–176 (GDRQTGKT) provides a ligand contact to ATP.

It belongs to the ATPase alpha/beta chains family. As to quaternary structure, F-type ATPases have 2 components, CF(1) - the catalytic core - and CF(0) - the membrane proton channel. CF(1) has five subunits: alpha(3), beta(3), gamma(1), delta(1), epsilon(1). CF(0) has three main subunits: a(1), b(2) and c(9-12). The alpha and beta chains form an alternating ring which encloses part of the gamma chain. CF(1) is attached to CF(0) by a central stalk formed by the gamma and epsilon chains, while a peripheral stalk is formed by the delta and b chains.

It is found in the cell inner membrane. The enzyme catalyses ATP + H2O + 4 H(+)(in) = ADP + phosphate + 5 H(+)(out). Functionally, produces ATP from ADP in the presence of a proton gradient across the membrane. The alpha chain is a regulatory subunit. The polypeptide is ATP synthase subunit alpha (Ruegeria pomeroyi (strain ATCC 700808 / DSM 15171 / DSS-3) (Silicibacter pomeroyi)).